The primary structure comprises 547 residues: Vacuolar fusion protein MON1 homolog B (547 aa).

Met1 bears the N-acetylmethionine mark. The span at 1–15 shows a compositional bias: low complexity; the sequence is MEVGGDTAAPAPGGA. The disordered stretch occupies residues 1 to 106; that stretch reads MEVGGDTAAP…GGDPSDEEWR (106 aa). 2 positions are modified to phosphoserine: Ser59 and Ser61.

This sequence belongs to the MON1/SAND family. As to quaternary structure, interacts with CCNT2; down-regulates CCNT2-mediated activation of viral promoters during herpes simplex virus 1/HHV-1 infection. Found in a complex with RMC1, CCZ1 MON1A and MON1B.

This chain is Vacuolar fusion protein MON1 homolog B (MON1B), found in Homo sapiens (Human).